The sequence spans 354 residues: MKLQTTYPSNNYPIYVERGAIDHISTYIDQFDQSFILIDEYVNQYFANKFDDILSYENVHKVIIPAGEKTKTFHQYQETLEYILSHHVTRNTAIIAVGGGATGDFAGFVAATLLRGVHFIQVPTTILAHDSSVGGKVGINSKQGKNLIGAFYRPTAVIYDLDFLKTLPFEQILSGYAEVYKHALLNGESTTQEIEQHFKDREILQSLNGMDKYIAKGIETKLDIVVADEKEQGVRKFLNLGHTFGHAVEYYHKIPHGHAVMVGIIYQFIVANALFDSKHEINHYIQYLIQLGYPLDMITDLDFETLYEYMLSDKKNDKQGVQMVLIRQFGDIVVQHVDQLTLQHACEQLKTYFK.

NAD(+)-binding positions include 100 to 104, 124 to 125, lysine 136, lysine 145, and 163 to 166; these read GATGD, TT, and FLKT. Glutamate 178, histidine 242, and histidine 256 together coordinate Zn(2+).

It belongs to the sugar phosphate cyclases superfamily. Dehydroquinate synthase family. Requires NAD(+) as cofactor. Co(2+) is required as a cofactor. The cofactor is Zn(2+).

Its subcellular location is the cytoplasm. The enzyme catalyses 7-phospho-2-dehydro-3-deoxy-D-arabino-heptonate = 3-dehydroquinate + phosphate. The protein operates within metabolic intermediate biosynthesis; chorismate biosynthesis; chorismate from D-erythrose 4-phosphate and phosphoenolpyruvate: step 2/7. In terms of biological role, catalyzes the conversion of 3-deoxy-D-arabino-heptulosonate 7-phosphate (DAHP) to dehydroquinate (DHQ). In Staphylococcus aureus (strain MSSA476), this protein is 3-dehydroquinate synthase.